Here is a 216-residue protein sequence, read N- to C-terminus: Octanoyltransferase (216 aa).

In terms of domain architecture, BPL/LPL catalytic spans 30 to 216; the sequence is GEAGEAVWLL…KRQFFEVFGA (187 aa). Substrate is bound by residues 69–76, 149–151, and 162–164; these read RGGQYTYH, AIG, and GLS. The active-site Acyl-thioester intermediate is Cys180.

It belongs to the LipB family.

Its subcellular location is the cytoplasm. The catalysed reaction is octanoyl-[ACP] + L-lysyl-[protein] = N(6)-octanoyl-L-lysyl-[protein] + holo-[ACP] + H(+). It functions in the pathway protein modification; protein lipoylation via endogenous pathway; protein N(6)-(lipoyl)lysine from octanoyl-[acyl-carrier-protein]: step 1/2. In terms of biological role, catalyzes the transfer of endogenously produced octanoic acid from octanoyl-acyl-carrier-protein onto the lipoyl domains of lipoate-dependent enzymes. Lipoyl-ACP can also act as a substrate although octanoyl-ACP is likely to be the physiological substrate. The protein is Octanoyltransferase of Jannaschia sp. (strain CCS1).